The sequence spans 454 residues: Transmembrane protease serine 3 (454 aa).

The Cytoplasmic portion of the chain corresponds to 1 to 48; that stretch reads MGENDPPAVEAPFSFRSLFGLDDLKISPVAPDADAVAAQILSLLPLKF. The helical; Signal-anchor for type II membrane protein transmembrane segment at 49–69 threads the bilayer; it reads FPIIVIGIIALILALAIGLGI. The Extracellular segment spans residues 70–454; that stretch reads HFDCSGKYRC…HEQMERDLKT (385 aa). The LDL-receptor class A domain maps to 72–108; it reads DCSGKYRCRSSFKCIELIARCDGVSDCKDGEDEYRCV. 10 disulfide bridges follow: Cys-73–Cys-85, Cys-79–Cys-98, Cys-92–Cys-107, Cys-129–Cys-194, Cys-142–Cys-204, Cys-207–Cys-324, Cys-242–Cys-258, Cys-338–Cys-407, Cys-370–Cys-386, and Cys-397–Cys-425. In terms of domain architecture, SRCR spans 109–205; it reads RVGGQNAVLQ…SGHVVTLQCT (97 aa). The Peptidase S1 domain maps to 217–449; that stretch reads IVGGNMSLLS…FLDWIHEQME (233 aa). An N-linked (GlcNAc...) asparagine glycan is attached at Asn-221. Active-site charge relay system residues include His-257 and Asp-304. Ser-401 functions as the Charge relay system in the catalytic mechanism.

The protein belongs to the peptidase S1 family. In terms of processing, undergoes autoproteolytic activation. Expressed in many tissues including fetal cochlea. Isoform T is found at increased levels in some carcinomas.

The protein resides in the endoplasmic reticulum membrane. In terms of biological role, probable serine protease that plays a role in hearing. Acts as a permissive factor for cochlear hair cell survival and activation at the onset of hearing and is required for saccular hair cell survival. Activates ENaC (in vitro). The chain is Transmembrane protease serine 3 (TMPRSS3) from Homo sapiens (Human).